A 184-amino-acid polypeptide reads, in one-letter code: Ribosome-recycling factor (184 aa).

It belongs to the RRF family.

It localises to the cytoplasm. Responsible for the release of ribosomes from messenger RNA at the termination of protein biosynthesis. May increase the efficiency of translation by recycling ribosomes from one round of translation to another. The sequence is that of Ribosome-recycling factor from Hyphomonas neptunium (strain ATCC 15444).